The primary structure comprises 231 residues: Large ribosomal subunit protein uL1 (231 aa).

Belongs to the universal ribosomal protein uL1 family. Part of the 50S ribosomal subunit.

Functionally, binds directly to 23S rRNA. The L1 stalk is quite mobile in the ribosome, and is involved in E site tRNA release. Its function is as follows. Protein L1 is also a translational repressor protein, it controls the translation of the L11 operon by binding to its mRNA. This chain is Large ribosomal subunit protein uL1, found in Agrobacterium fabrum (strain C58 / ATCC 33970) (Agrobacterium tumefaciens (strain C58)).